The following is a 679-amino-acid chain: ATP-dependent zinc metalloprotease FtsH (679 aa).

The Cytoplasmic portion of the chain corresponds to 1 to 6 (MNRIFR). Residues 7-27 (NTIFYLLIFLVIVGIVSVFNS) form a helical membrane-spanning segment. The Extracellular segment spans residues 28-114 (DQTETENVSF…IEPADETSGW (87 aa)). Residues 115–135 (VQFFTGIIPFIIIFILFFFLL) traverse the membrane as a helical segment. The Cytoplasmic segment spans residues 136–679 (SQAQGGGSRV…SFEDDTNKKE (544 aa)). 206-213 (GPPGTGKT) provides a ligand contact to ATP. His-428 is a binding site for Zn(2+). Glu-429 is an active-site residue. Zn(2+) is bound by residues His-432 and Asp-504. Basic and acidic residues-rich tracts occupy residues 621-642 (LEKEKASESDVKVNINSKKEET) and 658-679 (PIEKDPSVEDNRSFEDDTNKKE). The tract at residues 621–679 (LEKEKASESDVKVNINSKKEETPQVEAEQPQEPNTDEPIEKDPSVEDNRSFEDDTNKKE) is disordered.

It in the central section; belongs to the AAA ATPase family. This sequence in the C-terminal section; belongs to the peptidase M41 family. In terms of assembly, homohexamer. The cofactor is Zn(2+).

It is found in the cell membrane. In terms of biological role, acts as a processive, ATP-dependent zinc metallopeptidase for both cytoplasmic and membrane proteins. Plays a role in the quality control of integral membrane proteins. The protein is ATP-dependent zinc metalloprotease FtsH of Alkalihalophilus pseudofirmus (strain ATCC BAA-2126 / JCM 17055 / OF4) (Bacillus pseudofirmus).